Here is a 147-residue protein sequence, read N- to C-terminus: UPF0306 protein KPN78578_35330 (147 aa).

Belongs to the UPF0306 family.

This is UPF0306 protein KPN78578_35330 from Klebsiella pneumoniae subsp. pneumoniae (strain ATCC 700721 / MGH 78578).